Here is a 219-residue protein sequence, read N- to C-terminus: Ribose-5-phosphate isomerase A (219 aa).

Residues 28-31 (SGST), 81-84 (DGAD), and 94-97 (KGGG) each bind substrate. Glu-103 acts as the Proton acceptor in catalysis. Residue Lys-121 participates in substrate binding.

It belongs to the ribose 5-phosphate isomerase family. In terms of assembly, homodimer.

The enzyme catalyses aldehydo-D-ribose 5-phosphate = D-ribulose 5-phosphate. Its pathway is carbohydrate degradation; pentose phosphate pathway; D-ribose 5-phosphate from D-ribulose 5-phosphate (non-oxidative stage): step 1/1. Functionally, catalyzes the reversible conversion of ribose-5-phosphate to ribulose 5-phosphate. The polypeptide is Ribose-5-phosphate isomerase A (Haemophilus influenzae (strain PittGG)).